The primary structure comprises 304 residues: Glutaminase (304 aa).

Substrate-binding residues include S63, N114, E158, N165, Y189, Y240, and V258.

This sequence belongs to the glutaminase family. In terms of assembly, homotetramer.

It carries out the reaction L-glutamine + H2O = L-glutamate + NH4(+). The sequence is that of Glutaminase from Shewanella baltica (strain OS155 / ATCC BAA-1091).